Here is a 71-residue protein sequence, read N- to C-terminus: Peptide Ctri9819 (71 aa).

An N-terminal signal peptide occupies residues 1-23; that stretch reads MKTVSTVAILAIFLLIVITTIET. Leu-34 carries the leucine amide modification. A propeptide spanning residues 38-71 is cleaved from the precursor; it reads SKLETFKRIARTLSAGISAKRSLEDVNSLTGMSS.

This sequence belongs to the non-disulfide-bridged peptide (NDBP) superfamily. Short antimicrobial peptide (group 4) family. Expressed by the venom gland.

The protein resides in the secreted. Its function is as follows. Antimicrobial peptide. This Chaerilus tricostatus (Scorpion) protein is Peptide Ctri9819.